The sequence spans 104 residues: N(4)-acetylcytidine amidohydrolase (104 aa).

An ASCH domain is found at 7–93; the sequence is MTFFSRFEAD…EVIQEIYPGI (87 aa). The Proton acceptor role is filled by K22. T25 functions as the Nucleophile in the catalytic mechanism. E75 (proton donor) is an active-site residue.

This sequence belongs to the N(4)-acetylcytidine amidohydrolase family.

It carries out the reaction N(4)-acetylcytidine + H2O = cytidine + acetate + H(+). It catalyses the reaction N(4)-acetyl-2'-deoxycytidine + H2O = 2'-deoxycytidine + acetate + H(+). The catalysed reaction is N(4)-acetylcytosine + H2O = cytosine + acetate + H(+). In terms of biological role, catalyzes the hydrolysis of N(4)-acetylcytidine (ac4C). The sequence is that of N(4)-acetylcytidine amidohydrolase from Vibrio vulnificus (strain CMCP6).